A 208-amino-acid chain; its full sequence is Large ribosomal subunit protein uL4 (208 aa).

Residues 45–89 are disordered; sequence RQGTHAHKNRSAVSGGGKKPWRQKGTGRARQGSTRSPQWRGGGTV.

It belongs to the universal ribosomal protein uL4 family. In terms of assembly, part of the 50S ribosomal subunit.

Functionally, one of the primary rRNA binding proteins, this protein initially binds near the 5'-end of the 23S rRNA. It is important during the early stages of 50S assembly. It makes multiple contacts with different domains of the 23S rRNA in the assembled 50S subunit and ribosome. Its function is as follows. Forms part of the polypeptide exit tunnel. The polypeptide is Large ribosomal subunit protein uL4 (Lactococcus lactis subsp. cremoris (strain MG1363)).